The following is a 215-amino-acid chain: Cytochrome b6 (215 aa).

Residues 32–52 traverse the membrane as a helical segment; that stretch reads IFYCIGGITFTCFLVQVATGF. Cys-35 is a binding site for heme c. Residues Gly-37, Arg-83, His-86, His-100, Arg-103, and Arg-114 each coordinate heme b. Residues 90–110 traverse the membrane as a helical segment; sequence ASMMVLMMVLHVFRVYLTGGF. 2 helical membrane-spanning segments follow: residues 116-136 and 186-206; these read LTWVTGVIMAVCTVSFGVTGY and LHTFVLPLLTAVFMLMHFLMI. The heme b site is built by His-187 and His-202. 2 residues coordinate heme c: Arg-207 and Ile-211. Residue Ser-212 participates in heme b binding.

The protein belongs to the cytochrome b family. PetB subfamily. The 4 large subunits of the cytochrome b6-f complex are cytochrome b6, subunit IV (17 kDa polypeptide, PetD), cytochrome f and the Rieske protein, while the 4 small subunits are PetG, PetL, PetM and PetN. The complex functions as a dimer. It depends on heme b as a cofactor. Requires heme c as cofactor. Post-translationally, the N-terminus is blocked.

It is found in the plastid. The protein resides in the chloroplast thylakoid membrane. Component of the cytochrome b6-f complex, which mediates electron transfer between photosystem II (PSII) and photosystem I (PSI), cyclic electron flow around PSI, and state transitions. This Chlamydomonas reinhardtii (Chlamydomonas smithii) protein is Cytochrome b6.